The following is a 140-amino-acid chain: Large ribosomal subunit protein bL17 (140 aa).

This sequence belongs to the bacterial ribosomal protein bL17 family. Part of the 50S ribosomal subunit. Contacts protein L32.

The protein is Large ribosomal subunit protein bL17 of Rhizobium johnstonii (strain DSM 114642 / LMG 32736 / 3841) (Rhizobium leguminosarum bv. viciae).